Consider the following 62-residue polypeptide: uncharacterized protein (62 aa).

This is an uncharacterized protein from Schizosaccharomyces pombe (strain 972 / ATCC 24843) (Fission yeast).